We begin with the raw amino-acid sequence, 228 residues long: 2,3-bisphosphoglycerate-dependent phosphoglycerate mutase (228 aa).

Residues 8–15 (RHGQSVWN), 21–22 (TG), arginine 60, 87–90 (ERHY), lysine 98, 114–115 (RR), and 183–184 (GN) each bind substrate. Histidine 9 acts as the Tele-phosphohistidine intermediate in catalysis. The Proton donor/acceptor role is filled by glutamate 87.

Belongs to the phosphoglycerate mutase family. BPG-dependent PGAM subfamily. Homodimer.

The catalysed reaction is (2R)-2-phosphoglycerate = (2R)-3-phosphoglycerate. It functions in the pathway carbohydrate degradation; glycolysis; pyruvate from D-glyceraldehyde 3-phosphate: step 3/5. In terms of biological role, catalyzes the interconversion of 2-phosphoglycerate and 3-phosphoglycerate. This Rhodospirillum centenum (strain ATCC 51521 / SW) protein is 2,3-bisphosphoglycerate-dependent phosphoglycerate mutase.